A 119-amino-acid chain; its full sequence is Fluoride-specific ion channel FluC 1 (119 aa).

Transmembrane regions (helical) follow at residues 2–22 (TGAVAPPAVLVAAGGALGAVL), 37–57 (AGTLVVNVVGSFVLAALTFAA), 62–82 (TMLLFGTGACGAFTTFASFSV), and 99–119 (HALGNLLGAGLAVALAWLLVA). Residues G72 and T75 each coordinate Na(+).

The protein belongs to the fluoride channel Fluc/FEX (TC 1.A.43) family.

The protein localises to the cell membrane. It catalyses the reaction fluoride(in) = fluoride(out). With respect to regulation, na(+) is not transported, but it plays an essential structural role and its presence is essential for fluoride channel function. Functionally, fluoride-specific ion channel. Important for reducing fluoride concentration in the cell, thus reducing its toxicity. The protein is Fluoride-specific ion channel FluC 1 of Halobacterium salinarum (strain ATCC 700922 / JCM 11081 / NRC-1) (Halobacterium halobium).